A 436-amino-acid polypeptide reads, in one-letter code: MNNIRTIKGGVNLKGKVKVPGDKSISHRALIIGSIANGETTIEGFLHSEDPLSTADCLRKLGVNIPEIKKNEPFTISGLGLDGLKEPKEILNCGNSGTTMRLLMGLLAGQEDKNFILTGDISLNERPMGRVGKPLSLMGGKIFGREKGNKAPISIDGNKLKGCVIGTPVASAQVKSAILLAGLKASGTTSVIEPASSRDHTERMLKAFGADISVRGELGRNVVIKSGGKLIGQRILIPGDISSASFWMIAASIVPNSEVLIQNVGLNPTRTGILNVMDSMGCNYEILDKSTIAGEPIGSIKVKSSNNLKSFTIEGDILPKLIDEIPILTVAACFCNGVSEIKDAQELRVKETDRLKVMARQLQKFGAEVTEKEDGLIINGQSKFNSAEVDSETDHRVAMSLAIASLLAKGTSKIMRADAASVSYPTFWEDLATLTN.

3-phosphoshikimate contacts are provided by lysine 23, serine 24, and arginine 28. Residue lysine 23 coordinates phosphoenolpyruvate. The phosphoenolpyruvate site is built by glycine 97 and arginine 126. 3-phosphoshikimate-binding residues include serine 171, glutamine 173, aspartate 323, and lysine 350. Residue glutamine 173 participates in phosphoenolpyruvate binding. Aspartate 323 (proton acceptor) is an active-site residue. 2 residues coordinate phosphoenolpyruvate: arginine 354 and arginine 396.

Belongs to the EPSP synthase family. Monomer.

Its subcellular location is the cytoplasm. It carries out the reaction 3-phosphoshikimate + phosphoenolpyruvate = 5-O-(1-carboxyvinyl)-3-phosphoshikimate + phosphate. It participates in metabolic intermediate biosynthesis; chorismate biosynthesis; chorismate from D-erythrose 4-phosphate and phosphoenolpyruvate: step 6/7. Functionally, catalyzes the transfer of the enolpyruvyl moiety of phosphoenolpyruvate (PEP) to the 5-hydroxyl of shikimate-3-phosphate (S3P) to produce enolpyruvyl shikimate-3-phosphate and inorganic phosphate. The chain is 3-phosphoshikimate 1-carboxyvinyltransferase from Prochlorococcus marinus (strain AS9601).